Reading from the N-terminus, the 538-residue chain is MKAFSVTCLGFAVFSSSICVNINILQQIGYIKQQVRQLSYYSQSSSSYIVVKLLPNIQPTDNSCEFKSVTQYNKTLSNLLLPIAENINNIASPSPGSRRHKRFAGIAIGIAALGVATAAQVTAAVSLVQAQTNARAIAAMKNSIQATNRAIFEVKEGTQQLAIAVQAIQDHINTIMNTQLNNMTCQILDNQLATFLGLYLTELTTVFQPQLINPALSPISIQALRSLLGSMTPAVVQATLSTSISAAEILSAGLMEGQIVSVLLDEMQMIVKVNIPTIVTQSNALVIDFYSISSFINNQESIIQLPDRILEIGNEQWSYPAKNCKLTRHHIFCQYNEAERLSLESKLCLAGNISACVFSPIAGSYMRRFVALDGTIVANCRSLTCLCKSPSYPIYQPDHHAVTTIDLTACQTLSLDGLDFSIVSLSNITYAENLTISLSQTINTQPIDISTELSKVNASLQNAVKYIKESNHQLLSVSVNSKIGAIIVTALVLSILSIIISLLFCCWAYIATKEIRRINFKTNHINTISSSVDDLIRY.

A signal peptide spans methionine 1–cysteine 19. Residues valine 20 to lysine 482 lie on the Extracellular side of the membrane. N-linked (GlcNAc...) asparagine; by host glycans are attached at residues asparagine 56 and asparagine 73. A fusion peptide region spans residues phenylalanine 103–leucine 127. A coiled-coil region spans residues valine 128–glutamate 156. N-linked (GlcNAc...) asparagine; by host glycosylation occurs at asparagine 182. Disulfide bonds link cysteine 324/cysteine 333, cysteine 348/cysteine 356, cysteine 380/cysteine 385, and cysteine 387/cysteine 410. Asparagine 352 carries N-linked (GlcNAc...) asparagine; by host glycosylation. Asparagine 427, asparagine 433, and asparagine 457 each carry an N-linked (GlcNAc...) asparagine; by host glycan. Positions glutamate 452 to valine 477 form a coiled coil. Residues isoleucine 483–leucine 503 traverse the membrane as a helical segment. The Cytoplasmic segment spans residues phenylalanine 504–tyrosine 538.

The protein belongs to the paramyxoviruses fusion glycoprotein family. Homotrimer; disulfide-linked F1-F2. Interacts with host LAMP1; LAMP2 and LAMP3; these interactions promote the cleavage of the viral fusion protein F. In terms of processing, the inactive precursor F0 is glycosylated and proteolytically cleaved into F1 and F2 to be functionally active. The cleavage is mediated by cellular proteases including host FURIN during the transport and maturation of the polypeptide.

It localises to the virion membrane. The protein localises to the host cell membrane. Class I viral fusion protein. Under the current model, the protein has at least 3 conformational states: pre-fusion native state, pre-hairpin intermediate state, and post-fusion hairpin state. During viral and plasma cell membrane fusion, the heptad repeat (HR) regions assume a trimer-of-hairpins structure, positioning the fusion peptide in close proximity to the C-terminal region of the ectodomain. The formation of this structure appears to drive apposition and subsequent fusion of viral and plasma cell membranes. Directs fusion of viral and cellular membranes leading to delivery of the nucleocapsid into the cytoplasm. This fusion is pH independent and occurs directly at the outer cell membrane. The trimer of F1-F2 (F protein) probably interacts with HN at the virion surface. Upon HN binding to its cellular receptor, the hydrophobic fusion peptide is unmasked and interacts with the cellular membrane, inducing the fusion between cell and virion membranes. Later in infection, F proteins expressed at the plasma membrane of infected cells could mediate fusion with adjacent cells to form syncytia, a cytopathic effect that could lead to tissue necrosis. In Homo sapiens (Human), this protein is Fusion glycoprotein F0 (F).